The sequence spans 1005 residues: Negative regulator of pleiotropic drug resistance STB5 (1005 aa).

Residues 1–28 (MSGPDKGSDSGQTANDPKQKKARNGQME) form a disordered region. The zn(2)-C6 fungal-type DNA-binding region spans 32 to 59 (CARCRKLKKKCPRQLPECSNCLKAREPC). Disordered regions lie at residues 129 to 151 (GGEQ…SINR), 666 to 693 (KGKS…EDVK), and 763 to 831 (TKPT…SSLR). Positions 673 to 693 (KRFEKSKESDSDRGVTEEDVK) are enriched in basic and acidic residues. Residues 763-773 (TKPTANIMNDQ) show a composition bias toward polar residues. Residues 792–801 (EGPKSLKEGN) show a composition bias toward basic and acidic residues.

It is found in the nucleus. Its function is as follows. Transcription factor that negatively regulates pleiotropic drug resistance genes, including the ABC transporter genes CDR1, PDH1, and YOR1. The protein is Negative regulator of pleiotropic drug resistance STB5 of Candida glabrata (strain ATCC 2001 / BCRC 20586 / JCM 3761 / NBRC 0622 / NRRL Y-65 / CBS 138) (Yeast).